A 330-amino-acid chain; its full sequence is Autoinducer 2 import system permease protein LsrD (330 aa).

Over 1-4 (MRIR) the chain is Cytoplasmic. A helical transmembrane segment spans residues 5–25 (YGWELALAALLVIEIVAFGAI). Residues 26-42 (NPRMLDLNMLLFSTSDF) are Periplasmic-facing. Residues 43–63 (ICIGIVALPLTMVIVSGGIDI) form a helical membrane-spanning segment. At 64–67 (SFGS) the chain is on the cytoplasmic side. 2 consecutive transmembrane segments (helical) span residues 68–88 (TIGL…PMPL) and 89–109 (AILL…GLII). The Cytoplasmic segment spans residues 110 to 115 (YTKVNP). A helical transmembrane segment spans residues 116–136 (LVITLGTLYLFAGSALLLSGM). The Periplasmic segment spans residues 137 to 159 (AGATGYEGIGGFPMAFTDFANLD). The chain crosses the membrane as a helical span at residues 160–180 (VLGLPVPLIIFLICLLVFWLW). Residues 181–209 (LHKTHAGRNVFLIGQSPRVALYSAIPVNR) are Cytoplasmic-facing. Residues 210–230 (TLCALYAMTGLASAVAAVLLV) form a helical membrane-spanning segment. Over 231–237 (SYFGSAR) the chain is Periplasmic. 2 helical membrane-spanning segments follow: residues 238 to 258 (SDLG…GGAN) and 259 to 279 (IYGG…VGYL). At 280–285 (QQGLQM) the chain is on the periplasmic side. A helical transmembrane segment spans residues 286–306 (AGVPNQVSSALSGALLIVVVV). Topologically, residues 307–330 (GRSVSLHRQQIKEWLARRANNPLP) are cytoplasmic.

It belongs to the binding-protein-dependent transport system permease family. AraH/RbsC subfamily. The complex is composed of two ATP-binding proteins (LsrA), two transmembrane proteins (LsrC and LsrD) and a solute-binding protein (LsrB).

The protein resides in the cell inner membrane. Part of the ABC transporter complex LsrABCD involved in autoinducer 2 (AI-2) import. Probably responsible for the translocation of the substrate across the membrane. In Shigella flexneri serotype 5b (strain 8401), this protein is Autoinducer 2 import system permease protein LsrD (lsrD).